A 309-amino-acid polypeptide reads, in one-letter code: Protein FdhE homolog (309 aa).

Belongs to the FdhE family.

It localises to the cytoplasm. Necessary for formate dehydrogenase activity. The protein is Protein FdhE homolog of Citrobacter koseri (strain ATCC BAA-895 / CDC 4225-83 / SGSC4696).